A 152-amino-acid chain; its full sequence is Ribosome maturation factor RimP (152 aa).

Belongs to the RimP family.

The protein resides in the cytoplasm. Its function is as follows. Required for maturation of 30S ribosomal subunits. This is Ribosome maturation factor RimP from Aeromonas salmonicida (strain A449).